The sequence spans 214 residues: Large ribosomal subunit protein uL16-like (214 aa).

It belongs to the universal ribosomal protein uL16 family. Component of a male germ cell-specific 60S large ribosomal subunit (LSU), which contains RPL10L and RPL39L, instead of RPL10 and RPL39 paralogs. The composition of the rest of the complex is similar to classical ribosomes. As to expression, testis-specific.

It localises to the cytoplasm. Testis-specific component of the ribosome, which is required for the transition from prophase to metaphase in male meiosis I. Compensates for the inactivated X-linked RPL10 paralog during spermatogenesis. The ribosome is a large ribonucleoprotein complex responsible for the synthesis of proteins in the cell. The male germ cell-specific ribosome displays a ribosomal polypeptide exit tunnel of distinct size and charge states compared with the classical ribosome. It is responsible for regulating the biosynthesis and folding of a subset of male germ-cell-specific proteins that are essential for the formation of sperm. The protein is Large ribosomal subunit protein uL16-like of Mus musculus (Mouse).